A 109-amino-acid polypeptide reads, in one-letter code: Mannose-specific lectin (109 aa).

Residues Met-25 to His-109 form the Bulb-type lectin domain. Positions 26, 28, 30, 34, 37, 38, 41, 42, 44, 57, 59, 61, 65, 72, 73, 76, 83, 89, 91, 93, 97, and 102 each coordinate alpha-D-mannopyranose. Cys-29 and Cys-52 are disulfide-bonded.

As to quaternary structure, homotetramer; antiparallel. In terms of tissue distribution, detected in bulbs (at protein level).

It localises to the secreted. Strongly inhibited by alpha-1,6-linked mannotriose. Inhibited by various oligosaccharides of P.pastoris mannan including, Man(alpha-l,6)Man-alpha-O-Me, Man(alpha-l,2)Man, Man(alpha-l,3)Man-alpha-O-Me, Man(alpha-l,2)Man, alpha-1,2-linked mannotriose, and Man(alpha-1,6)Glc, in order of decreasing potency. Weakly inhibited by elsinotetraose. Not inhibited by maltose or nigerose. Functionally, D-mannose-binding lectin which binds alpha-D-linked mannose. Displays a high affinity for alpha-(1-6)-mannose oligomers. Able to interact with both terminal and internal alpha-D-mannosyl residues. Displays antiviral activity and therefore may contribute to defense against infections. In Narcissus pseudonarcissus (Daffodil), this protein is Mannose-specific lectin.